Consider the following 231-residue polypeptide: Platelet-activating factor acetylhydrolase IB subunit alpha1 (231 aa).

Serine 2 carries the N-acetylserine modification. Serine 2 is subject to Phosphoserine. Active-site residues include serine 47, aspartate 192, and histidine 195.

The protein belongs to the 'GDSL' lipolytic enzyme family. Platelet-activating factor acetylhydrolase IB beta/gamma subunits subfamily. As to quaternary structure, forms a catalytic dimer which is either homodimer (alpha1/alpha1 homodimer) or heterodimer with PAFAH1B2 (alpha1/alpha2 heterodimer). Component of the cytosolic (PAF-AH (I)) heterotetrameric enzyme, which is composed of PAFAH1B1 (beta), PAFAH1B2 (alpha2) and PAFAH1B3 (alpha1) subunits. The catalytic activity of the enzyme resides in the alpha1 (PAFAH1B3) and alpha2 (PAFAH1B2) subunits, whereas the beta subunit (PAFAH1B1) has regulatory activity. Trimer formation is not essential for the catalytic activity. Interacts with VLDLR; this interaction may modulate the Reelin pathway.

Its subcellular location is the cytoplasm. It carries out the reaction a 1-O-alkyl-2-acetyl-sn-glycero-3-phosphocholine + H2O = a 1-O-alkyl-sn-glycero-3-phosphocholine + acetate + H(+). The catalysed reaction is 1-O-hexadecyl-2-acetyl-sn-glycero-3-phosphocholine + H2O = 1-O-hexadecyl-sn-glycero-3-phosphocholine + acetate + H(+). It catalyses the reaction 1-O-hexadecyl-2-acetyl-sn-glycero-3-phosphate + H2O = 1-O-hexadecyl-sn-glycero-3-phosphate + acetate + H(+). Beta subunit (PAFAH1B1) inhibits the acetylhydrolase activity of the alpha1/alpha1 catalytic homodimer. Alpha1 catalytic subunit of the cytosolic type I platelet-activating factor (PAF) acetylhydrolase (PAF-AH (I)) heterotetrameric enzyme that catalyzes the hydrolyze of the acetyl group at the sn-2 position of PAF and its analogs and modulates the action of PAF. The activity and substrate specificity of PAF-AH (I) are affected by its subunit composition. Both alpha1/alpha1 homodimer (PAFAH1B3/PAFAH1B3 homodimer) and alpha1/alpha2 heterodimer(PAFAH1B3/PAFAH1B2 heterodimer) hydrolyze 1-O-alkyl-2-acetyl-sn-glycero-3-phosphoric acid (AAGPA) more efficiently than PAF, but they have little hydrolytic activity towards 1-O-alkyl-2-acetyl-sn-glycero-3-phosphorylethanolamine (AAGPE). Plays an important role during the development of brain. This Pongo abelii (Sumatran orangutan) protein is Platelet-activating factor acetylhydrolase IB subunit alpha1.